We begin with the raw amino-acid sequence, 216 residues long: Ribosomal RNA small subunit methyltransferase G (216 aa).

Residues glycine 83, methionine 88, 134-135 (VE), and arginine 149 contribute to the S-adenosyl-L-methionine site.

The protein belongs to the methyltransferase superfamily. RNA methyltransferase RsmG family.

The protein localises to the cytoplasm. The enzyme catalyses guanosine(527) in 16S rRNA + S-adenosyl-L-methionine = N(7)-methylguanosine(527) in 16S rRNA + S-adenosyl-L-homocysteine. Its function is as follows. Specifically methylates the N7 position of guanine in position 527 of 16S rRNA. This chain is Ribosomal RNA small subunit methyltransferase G, found in Pseudomonas putida (strain GB-1).